We begin with the raw amino-acid sequence, 419 residues long: 1,4-beta-D-glucan cellobiohydrolase CEL6B (419 aa).

The first 47 residues, Met-1–Ala-47, serve as a signal peptide directing secretion. Residues Trp-111 and Ser-113 each coordinate substrate. Catalysis depends on proton donor residues Asp-152 and Asp-199. Trp-247 is a binding site for substrate. The N-linked (GlcNAc...) asparagine glycan is linked to Asn-284. Asn-287 contributes to the substrate binding site. An N-linked (GlcNAc...) asparagine glycan is attached at Asn-298. Trp-347 contributes to the substrate binding site. Asn-364 is a glycosylation site (N-linked (GlcNAc...) asparagine). The substrate site is built by Lys-375 and Glu-379.

It belongs to the glycosyl hydrolase 6 (cellulase B) family. Post-translationally, both N- and O-glycosylated.

It is found in the secreted. The enzyme catalyses Hydrolysis of (1-&gt;4)-beta-D-glucosidic linkages in cellulose and cellotetraose, releasing cellobiose from the non-reducing ends of the chains.. Functionally, exoglucanase that plays an important function in biomass degradation by catalyzing the hydrolysis of the non-reducing end beta-1,4-glucosidic linkages in cellulose and cellotetraose to release cellobiose. Hydrolyzes crystalline and amorphous cellulose but is inactive on hydroxyethyl cellulose, mannan, galactomannan, xyloglucan, arabinoxylan, arabinan, xylan, and pectin. The protein is 1,4-beta-D-glucan cellobiohydrolase CEL6B of Podospora anserina (strain S / ATCC MYA-4624 / DSM 980 / FGSC 10383) (Pleurage anserina).